The chain runs to 152 residues: Deoxyuridine 5'-triphosphate nucleotidohydrolase (152 aa).

Residues 71–73, asparagine 84, 88–90, and methionine 98 each bind substrate; these read RSG and LID.

It belongs to the dUTPase family. Mg(2+) serves as cofactor.

It carries out the reaction dUTP + H2O = dUMP + diphosphate + H(+). The protein operates within pyrimidine metabolism; dUMP biosynthesis; dUMP from dCTP (dUTP route): step 2/2. This enzyme is involved in nucleotide metabolism: it produces dUMP, the immediate precursor of thymidine nucleotides and it decreases the intracellular concentration of dUTP so that uracil cannot be incorporated into DNA. In Shigella flexneri, this protein is Deoxyuridine 5'-triphosphate nucleotidohydrolase.